Consider the following 264-residue polypeptide: MSNSNIHTTAVIAEGAKLGKNVKIGPYCIIGPEVVLHDNVELKSHVVIEGITEIGENTVIYPFASIGQPPQILKYANERSSTIIGSNNTIREYVTVQAGSQRGGMMTRVGNNNLFMVGVHIGHDCKIGNNVVFANYVSLAGHIGVGDYTIIGGLSAVHQYARIGEYSMIGGLSPVGADVIPFGLVSSKRAVLEGLNLIGMNRKGFDKVKSLSALKAIEEIFSGEGNFAERIKQVAEKYNNNSIVIQIIDFLNQDSNRAFCRFEK.

This sequence belongs to the transferase hexapeptide repeat family. LpxA subfamily. As to quaternary structure, homotrimer.

It localises to the cytoplasm. It carries out the reaction a (3R)-hydroxyacyl-[ACP] + UDP-N-acetyl-alpha-D-glucosamine = a UDP-3-O-[(3R)-3-hydroxyacyl]-N-acetyl-alpha-D-glucosamine + holo-[ACP]. Its pathway is glycolipid biosynthesis; lipid IV(A) biosynthesis; lipid IV(A) from (3R)-3-hydroxytetradecanoyl-[acyl-carrier-protein] and UDP-N-acetyl-alpha-D-glucosamine: step 1/6. In terms of biological role, involved in the biosynthesis of lipid A, a phosphorylated glycolipid that anchors the lipopolysaccharide to the outer membrane of the cell. The chain is Acyl-[acyl-carrier-protein]--UDP-N-acetylglucosamine O-acyltransferase from Rickettsia conorii (strain ATCC VR-613 / Malish 7).